A 520-amino-acid chain; its full sequence is MEELQGYLEKDRSRQQHFLYPLLFQEYIYALAHNHGLNGSIFYEPVEVFGYDNKSSLVLVKRLIIRIYQQNFWISLVNDSNQNRFVGYNHNNFFXSHFYSQMISESFAIIVEIPFSLRLVSYFEEKEIPKYHNLRSIHSIFPFLEDKLSHLNYVSDILIPHPIHMEILVQILQCWIQDVPFLHLLRFFLHEYHNLNSLLITQKKSIYVFSKENKRLFRFLYNSYVFEWEFLLVFIRKQSSYLRLTSSGTFLERTHFYEKIEHLQIEHFVVVCRNYFHRTLWFCKDPFMHYVRYQGKAILASKGTHLLMKKCKYHFFNFWQYYFHVWSQPYRIHLNQLSNYSFYFLGYLSSLLLNFSAVRNQMLENSFLIDTITKKFDTIVPVIFLIGSLAKAKFCTVSGHPISKPIWTDLSDSDILDRFGRICRNLSHYHSGSSKKQGLYRIKYILRLSCARTLARKHKSTVRTFLRRLGSGLLEEFFTEEEQVLSLIFPKATPFILHGSHRERIWYLDIICINDLVNHS.

It belongs to the intron maturase 2 family. MatK subfamily.

The protein localises to the plastid. The protein resides in the chloroplast. Functionally, usually encoded in the trnK tRNA gene intron. Probably assists in splicing its own and other chloroplast group II introns. This is Maturase K from Beaucarnea recurvata (Elephant-foot tree).